The chain runs to 629 residues: Interleukin-23 receptor (629 aa).

An N-terminal signal peptide occupies residues 1–23 (MNQVTIQWDAVIALYILFSWCHG). The Extracellular portion of the chain corresponds to 24–355 (GITNINCSGH…LTSDNRGDIG (332 aa)). An N-linked (GlcNAc...) asparagine; partial glycan is attached at N29. N47, N81, and N141 each carry an N-linked (GlcNAc...) asparagine glycan. Fibronectin type-III domains lie at 127 to 217 (IPDE…LDDI) and 219 to 318 (IPSA…TPET). N180 carries N-linked (GlcNAc...) (high mannose) asparagine glycosylation. N232 and N262 each carry an N-linked (GlcNAc...) asparagine glycan. N-linked (GlcNAc...) asparagine; partial glycosylation is present at N273. A helical membrane pass occupies residues 356–376 (LLLGMIVFAVMLSILSLIGIF). Over 377–629 (NRSFRTGIKR…HFNRISLLEK (253 aa)) the chain is Cytoplasmic.

The protein belongs to the type I cytokine receptor family. Type 2 subfamily. In terms of assembly, heterodimer with IL12RB1. In presence of IL23, the heterodimer forms the IL23 receptor. Interacts with JAK2 and in presence of IL23 with STAT3. In terms of processing, phosphorylated in response to IL23. Expressed by monocytes, Th1, Th0, NK and dendritic cells. Isoform 1 is specifically expressed in NK cells.

The protein resides in the cell membrane. In terms of biological role, associates with IL12RB1 to form the interleukin-23 receptor. Binds IL23 and mediates T-cells, NK cells and possibly certain macrophage/myeloid cells stimulation probably through activation of the Jak-Stat signaling cascade. IL23 functions in innate and adaptive immunity and may participate in acute response to infection in peripheral tissues. IL23 may be responsible for autoimmune inflammatory diseases and be important for tumorigenesis. The chain is Interleukin-23 receptor (IL23R) from Homo sapiens (Human).